The sequence spans 468 residues: Glycosyl hydrolase family 109 protein (468 aa).

A signal peptide spans M1–A19. Residues M67 to R68, D89, W138 to H141, E158 to V159, and N187 each bind NAD(+). Substrate contacts are provided by residues Y216, R232, Y244 to H247, and Y322. Position 244 (Y244) interacts with NAD(+).

Belongs to the Gfo/Idh/MocA family. Glycosyl hydrolase 109 subfamily. The cofactor is NAD(+).

Functionally, glycosidase. This Porphyromonas gingivalis (strain ATCC BAA-308 / W83) protein is Glycosyl hydrolase family 109 protein.